The following is a 746-amino-acid chain: Protein C-mannosyl-transferase DPY19L1 (746 aa).

A disordered region spans residues 1–68 (MVLQARSKHR…RAETAAPAPD (68 aa)). Residues 14 to 27 (PRPPRPARSSPPPL) show a composition bias toward pro residues. 12 consecutive transmembrane segments (helical) span residues 93-113 (STLL…TQLF), 139-159 (YSYF…WMIM), 227-247 (ACFY…LFFI), 248-268 (YGTY…CFFF), 308-328 (YRGS…PWQF), 329-349 (AQFV…VGYI), 357-377 (IIYT…GNSM), 378-398 (LLTS…AMKP), 405-425 (VSEL…TVTL), 481-501 (LLLP…INDM), 520-540 (GELV…ILIM), and 562-582 (LFGW…VLAA).

Belongs to the dpy-19 family.

Its subcellular location is the endoplasmic reticulum membrane. The enzyme catalyses L-tryptophyl-[protein] + a di-trans,poly-cis-dolichyl beta-D-mannosyl phosphate = C-alpha-D-mannosyl-L-tryptophyl-[protein] + a di-trans,poly-cis-dolichyl phosphate + H(+). The protein operates within protein modification; protein glycosylation. Its function is as follows. C-mannosyltransferase that mediates the C-mannosylation tryptophan residues on target proteins. The reaction occurs on the luminal side of the endoplasmic reticulum and involves the transfer of a mannose unit from a dolichylphosphate mannose (Dol-P-Man) donor to an acceptor protein containing a WxxW consensus sequence. C-mannosylates the first two tryptophans in the WxxWxxWxxC sequence motif in thrombospondin (TSP) type-1 repeats of UNC5A. Regulates neurite extension during development. The polypeptide is Protein C-mannosyl-transferase DPY19L1 (Dpy19l1) (Rattus norvegicus (Rat)).